Consider the following 569-residue polypeptide: MPFKISRQAYAETYGPTKGDRIRLADTDLILEVEQDHTHYGDEVKFGGGKVIRDGMGQSQQSRDNGVVDTVITNALILDWWGIVKADIGIKDGKISGIGKAGNPDTQEGVNIIVGASTEAIAGEGSIITAGAIDSHIHFICPQQIETALASGVTTMLGGGTGPATGTNATTCTPGAFHISRMLQSAEGFPVNLGFFGKGNATNKAALEEQVRAGACGLKLHEDWGTTPACIDSCLSVADQLDVQVCIHTDTLNEAGFVEDTIKAIRGRTIHTFHTEGAGGGHAPDIIKICGESNVIPSSTNPTRPFTLNTLEEHLDMLMVCHHLDPKIPEDVAFAESRIRRETIAAEDILHDLGAFSIIASDSQAMGRVGEVISRTFQTAHKMKVQRGALPEDNQRNDNHRLKRYISKVTINPAIAHGISAHVGSVEVGKLADLVLWKPGFFGIKPDLVVKGGCIAWAQMGDANASIPTPQPVHGRPMFSSFGKAINPTCLTFLSESAIDAGVPERLKLERSYAPVKDTRKISKQSMKLNDARPKIEVDPQTYEVFANGELLTCEPAELLPLAQRYLLL.

Positions 131–569 (GAIDSHIHFI…LPLAQRYLLL (439 aa)) constitute a Urease domain. Ni(2+)-binding residues include His136, His138, and Lys219. Lys219 carries the post-translational modification N6-carboxylysine. His221 is a substrate binding site. His248 and His274 together coordinate Ni(2+). The active-site Proton donor is the His322. Asp362 provides a ligand contact to Ni(2+).

The protein belongs to the metallo-dependent hydrolases superfamily. Urease alpha subunit family. In terms of assembly, heterotrimer of UreA (gamma), UreB (beta) and UreC (alpha) subunits. Three heterotrimers associate to form the active enzyme. Ni cation is required as a cofactor. In terms of processing, carboxylation allows a single lysine to coordinate two nickel ions.

It localises to the cytoplasm. The catalysed reaction is urea + 2 H2O + H(+) = hydrogencarbonate + 2 NH4(+). The protein operates within nitrogen metabolism; urea degradation; CO(2) and NH(3) from urea (urease route): step 1/1. This Prochlorococcus marinus (strain NATL2A) protein is Urease subunit alpha.